Here is a 470-residue protein sequence, read N- to C-terminus: MREDTFFFQWWFLVSGLSFIFLLPQAFTYHTPPINPCFAHPFLPPITNPRLLKAFTALQAWKFTITSDPNGFTSNWCGPNVCNYTGVFCAPALDNPYVLTVAGIDLNHANIAGYLPLELGLLTDLALFHINSNRFQGQLPKTLKCLHLLHELDVSNNKLSGEFPSVIFSLPSLKFLDIRFNEFQGDVPSQLFDLNLDALFINDNKFQFRLPRNIGNSPVSVLVLANNDLQGSCVPPSFYKMGKTLHEIIITNSQLTGCLNREIGLLNQLTVFDVSYNNLVGSLPETIGDMKSLEQLNIAHNKFSGYIPESICRLPRLENFTYSYNFFSGEPPACLRLQEFDDRRNCLPSRPMQRSLAECKSFSSYPIDCASFGCSPPSPPPPPPPPPPPPPPPPPPPPPPPPPPPPPYVYPSPPPPPPSPPPYVYPPPPPPYVYPPPPSPPYVYPPPPPSPQPYMYPSPPCNDLPTPVHY.

An N-terminal signal peptide occupies residues 1–28 (MREDTFFFQWWFLVSGLSFIFLLPQAFT). Asn83 is a glycosylation site (N-linked (GlcNAc...) asparagine). LRR repeat units follow at residues 98–122 (VLTV…LGLL), 123–146 (TDLA…LKCL), 147–170 (HLLH…IFSL), 171–194 (PSLK…LFDL), 196–217 (LDAL…IGNS), 219–241 (VSVL…FYKM), 243–265 (KTLH…EIGL), 266–290 (LNQL…IGDM), 291–314 (KSLE…ICRL), and 316–337 (RLEN…CLRL). N-linked (GlcNAc...) asparagine glycosylation is present at Asn319. The interval 378 to 411 (SPPPPPPPPPPPPPPPPPPPPPPPPPPPPPYVYP) is disordered. A contains the Ser-Pro(4) repeats region spans residues 378-470 (SPPPPPPPPP…CNDLPTPVHY (93 aa)).

Hydroxylated on proline residues in the S-P-P-P-P repeat. Post-translationally, O-glycosylated on hydroxyprolines. Expressed in roots.

It is found in the secreted. It localises to the cell wall. Modulates cell morphogenesis by regulating cell wall formation and assembly, and/or growth polarization. The sequence is that of Leucine-rich repeat extensin-like protein 6 (LRX6) from Arabidopsis thaliana (Mouse-ear cress).